A 196-amino-acid polypeptide reads, in one-letter code: MSRIFAYCRISTLDQTTENQRREIESAGFKIKPQQIIEEHISGSAATSERPGFNRLLARLKCGDQLIVTKLDRLGCNAMDIRKTVEQLTETGIRVHCLALGGIDLTSPTGKMMMQVISAVAEFERDLLLERTHSGIVRARGAGKRFGRPPVLNEEQKQVVFERIKSGVSISAIAREFKTSRQTILRAKAKLQTPDI.

One can recognise a Resolvase/invertase-type recombinase catalytic domain in the interval 3–143 (RIFAYCRIST…SGIVRARGAG (141 aa)). Residue Ser11 is the O-(5'-phospho-DNA)-serine intermediate of the active site.

This sequence belongs to the site-specific recombinase resolvase family.

In Escherichia coli (strain K12), this protein is Serine recombinase PinR (pinR).